Consider the following 310-residue polypeptide: 4-hydroxyproline 2-epimerase (310 aa).

Residue C88 is the Proton acceptor of the active site. Residues 89–90, H208, and D232 each bind substrate; that span reads GH. C236 functions as the Proton donor in the catalytic mechanism. 237–238 lines the substrate pocket; that stretch reads GT.

Belongs to the proline racemase family.

The catalysed reaction is trans-4-hydroxy-L-proline = cis-4-hydroxy-D-proline. In terms of biological role, catalyzes the epimerization of trans-4-hydroxy-L-proline (t4LHyp) to cis-4-hydroxy-D-proline (c4DHyp). Is likely involved in a degradation pathway that converts t4LHyp to alpha-ketoglutarate. Displays no proline racemase activity. The chain is 4-hydroxyproline 2-epimerase from Pseudomonas fluorescens (strain ATCC BAA-477 / NRRL B-23932 / Pf-5).